A 373-amino-acid chain; its full sequence is Chaperone protein DnaJ (373 aa).

One can recognise a J domain in the interval 5-70 (CYYEVLEVSR…EKRSRYDRFG (66 aa)). The CR-type zinc-finger motif lies at 134 to 212 (GTEVELNIPV…CRGAGYVRKQ (79 aa)). Cys-147, Cys-150, Cys-164, Cys-167, Cys-186, Cys-189, Cys-200, and Cys-203 together coordinate Zn(2+). CXXCXGXG motif repeat units lie at residues 147–154 (CDTCEGSG), 164–171 (CSHCGGRG), 186–193 (CPACNGRG), and 200–207 (CSECRGAG).

This sequence belongs to the DnaJ family. In terms of assembly, homodimer. Requires Zn(2+) as cofactor.

It localises to the cytoplasm. Functionally, participates actively in the response to hyperosmotic and heat shock by preventing the aggregation of stress-denatured proteins and by disaggregating proteins, also in an autonomous, DnaK-independent fashion. Unfolded proteins bind initially to DnaJ; upon interaction with the DnaJ-bound protein, DnaK hydrolyzes its bound ATP, resulting in the formation of a stable complex. GrpE releases ADP from DnaK; ATP binding to DnaK triggers the release of the substrate protein, thus completing the reaction cycle. Several rounds of ATP-dependent interactions between DnaJ, DnaK and GrpE are required for fully efficient folding. Also involved, together with DnaK and GrpE, in the DNA replication of plasmids through activation of initiation proteins. This chain is Chaperone protein DnaJ, found in Maridesulfovibrio salexigens (strain ATCC 14822 / DSM 2638 / NCIMB 8403 / VKM B-1763) (Desulfovibrio salexigens).